Consider the following 407-residue polypeptide: FK506-binding protein 3 (407 aa).

Disordered regions lie at residues 46 to 136 (RIEG…DDEG), 191 to 223 (DEDE…EDEV), and 236 to 297 (QDDE…PKLV). Acidic residues-rich tracts occupy residues 65 to 88 (NFDD…EVSA) and 103 to 136 (DGLD…DDEG). Over residues 236-252 (QDDEDDEDDEDEEEEPV) the composition is skewed to acidic residues. Residues 253–272 (VEPKKILKRAAEEKKQEKAA) show a composition bias toward basic and acidic residues. A PPIase FKBP-type domain is found at 321–407 (GSKVGVRYVG…TFDVKVVNIK (87 aa)).

Belongs to the FKBP-type PPIase family. FKBP3/4 subfamily.

The protein resides in the nucleus. Its subcellular location is the nucleolus. The catalysed reaction is [protein]-peptidylproline (omega=180) = [protein]-peptidylproline (omega=0). Its activity is regulated as follows. Inhibited by both FK506 and rapamycin. Its function is as follows. PPIases accelerate the folding of proteins. It catalyzes the cis-trans isomerization of proline imidic peptide bonds in oligopeptides. The sequence is that of FK506-binding protein 3 (FPR3) from Yarrowia lipolytica (strain CLIB 122 / E 150) (Yeast).